The following is a 1119-amino-acid chain: Protein translocase subunit SecA (1119 aa).

Residues Gln-177, 195-199 (GEGKT), and Asp-692 each bind ATP. The segment at 1025-1081 (APSIHEARQTKSKEKVETRKEEIPNMDERAAQSRAAGNTQRQQPEVTETIVRDRPKI) is disordered. Residues 1029-1055 (HEARQTKSKEKVETRKEEIPNMDERAA) are compositionally biased toward basic and acidic residues. Residues 1059–1070 (AAGNTQRQQPEV) are compositionally biased toward polar residues.

This sequence belongs to the SecA family. In terms of assembly, monomer and homodimer. Part of the essential Sec protein translocation apparatus which comprises SecA, SecYEG and auxiliary proteins SecDF. Other proteins may also be involved.

Its subcellular location is the cell inner membrane. The protein resides in the cytoplasm. It catalyses the reaction ATP + H2O + cellular proteinSide 1 = ADP + phosphate + cellular proteinSide 2.. Part of the Sec protein translocase complex. Interacts with the SecYEG preprotein conducting channel. Has a central role in coupling the hydrolysis of ATP to the transfer of proteins into and across the cell membrane, serving as an ATP-driven molecular motor driving the stepwise translocation of polypeptide chains across the membrane. This is Protein translocase subunit SecA from Christiangramia forsetii (strain DSM 17595 / CGMCC 1.15422 / KT0803) (Gramella forsetii).